Here is a 737-residue protein sequence, read N- to C-terminus: Pentatricopeptide repeat-containing protein At3g49740 (737 aa).

PPR repeat units lie at residues 20-55 (TLLN…TLRP), 56-90 (DQYS…GLLC), 91-121 (HSHV…IDEP), 122-152 (DVYS…MPER), 154-188 (DVAI…GVRH), 189-222 (DKFG…GFFI), 223-253 (ASSV…TDVA), 256-289 (DQVT…SLRP), 290-321 (TDLT…GYEK), 322-352 (YTLV…LEEK), 353-387 (DLVT…GVKP), 388-418 (DEFT…FGLS), 420-454 (KIEI…NLIS), 455-485 (WNAI…EVRI), 488-522 (DAYT…GQFK), 523-553 (ETLI…MSEK), 554-588 (DVVS…GKVI), 590-620 (DAAT…MVEF), and 626-656 (NVDH…SEKT). Residues 663 to 737 (VWWALFSACA…KQRGCSWMRL (75 aa)) form a type E motif; degenerate region.

It belongs to the PPR family. PCMP-E subfamily.

The chain is Pentatricopeptide repeat-containing protein At3g49740 (PCMP-E84) from Arabidopsis thaliana (Mouse-ear cress).